The following is a 322-amino-acid chain: tRNA uridine(34) hydroxylase (322 aa).

The 95-residue stretch at Leu-126 to Glu-220 folds into the Rhodanese domain. Cys-180 acts as the Cysteine persulfide intermediate in catalysis.

It belongs to the TrhO family.

The enzyme catalyses uridine(34) in tRNA + AH2 + O2 = 5-hydroxyuridine(34) in tRNA + A + H2O. Its function is as follows. Catalyzes oxygen-dependent 5-hydroxyuridine (ho5U) modification at position 34 in tRNAs. The sequence is that of tRNA uridine(34) hydroxylase from Shouchella clausii (strain KSM-K16) (Alkalihalobacillus clausii).